The chain runs to 283 residues: 4-diphosphocytidyl-2-C-methyl-D-erythritol kinase (283 aa).

Residue K10 is part of the active site. 95–105 lines the ATP pocket; sequence PVAAGLGGGSS. Residue D137 is part of the active site.

The protein belongs to the GHMP kinase family. IspE subfamily.

The catalysed reaction is 4-CDP-2-C-methyl-D-erythritol + ATP = 4-CDP-2-C-methyl-D-erythritol 2-phosphate + ADP + H(+). Its pathway is isoprenoid biosynthesis; isopentenyl diphosphate biosynthesis via DXP pathway; isopentenyl diphosphate from 1-deoxy-D-xylulose 5-phosphate: step 3/6. Catalyzes the phosphorylation of the position 2 hydroxy group of 4-diphosphocytidyl-2C-methyl-D-erythritol. The polypeptide is 4-diphosphocytidyl-2-C-methyl-D-erythritol kinase (Limosilactobacillus fermentum (strain NBRC 3956 / LMG 18251) (Lactobacillus fermentum)).